A 214-amino-acid chain; its full sequence is Thymidylate kinase (214 aa).

9–16 (GIEGCGKT) serves as a coordination point for ATP.

The protein belongs to the thymidylate kinase family.

The catalysed reaction is dTMP + ATP = dTDP + ADP. Phosphorylation of dTMP to form dTDP in both de novo and salvage pathways of dTTP synthesis. In Geotalea daltonii (strain DSM 22248 / JCM 15807 / FRC-32) (Geobacter daltonii), this protein is Thymidylate kinase.